The chain runs to 417 residues: UDP-N-acetylglucosamine 1-carboxyvinyltransferase (417 aa).

22–23 serves as a coordination point for phosphoenolpyruvate; the sequence is KN. Arginine 91 is a binding site for UDP-N-acetyl-alpha-D-glucosamine. The active-site Proton donor is the cysteine 115. Cysteine 115 carries the post-translational modification 2-(S-cysteinyl)pyruvic acid O-phosphothioketal. UDP-N-acetyl-alpha-D-glucosamine is bound by residues 120–124, aspartate 304, and isoleucine 326; that span reads RPVDQ.

It belongs to the EPSP synthase family. MurA subfamily.

The protein resides in the cytoplasm. It catalyses the reaction phosphoenolpyruvate + UDP-N-acetyl-alpha-D-glucosamine = UDP-N-acetyl-3-O-(1-carboxyvinyl)-alpha-D-glucosamine + phosphate. The protein operates within cell wall biogenesis; peptidoglycan biosynthesis. In terms of biological role, cell wall formation. Adds enolpyruvyl to UDP-N-acetylglucosamine. This is UDP-N-acetylglucosamine 1-carboxyvinyltransferase from Desulfovibrio desulfuricans (strain ATCC 27774 / DSM 6949 / MB).